The primary structure comprises 61 residues: uncharacterized protein (61 aa).

Transmembrane regions (helical) follow at residues 4 to 24 and 34 to 54; these read IIAFIWTFLLSHMACYLVASM and SSVIAVVLYVLIMVLAEIMPM.

It localises to the cell membrane. This is an uncharacterized protein from Bacillus subtilis (strain 168).